Reading from the N-terminus, the 538-residue chain is uncharacterized protein (538 aa).

Low complexity predominate over residues M1–S13. Residues M1–F43 are disordered. Helical transmembrane passes span I97–F117, V134–A154, K163–A183, F194–M214, I226–A246, W254–K274, P328–L348, A367–F387, L408–S428, V434–F454, L458–I478, and G504–F524.

This sequence belongs to the major facilitator superfamily. CAR1 family.

It is found in the endoplasmic reticulum. The protein localises to the membrane. This is an uncharacterized protein from Schizosaccharomyces pombe (strain 972 / ATCC 24843) (Fission yeast).